The chain runs to 551 residues: C6 finger transcription factor imqK (551 aa).

The segment at residues 11 to 53 (CDRCRGQKLRCVRLPGPAREDSPRSARSVNQPCERCKRAKVVC) is a DNA-binding region (zn(2)-C6 fungal-type). Disordered stretches follow at residues 280-302 (RQGMSAASDPNYPASGLGETSPS) and 351-378 (NEYSSSRSQSRNHSTSASSRSKDGRISA). Over residues 351–369 (NEYSSSRSQSRNHSTSASS) the composition is skewed to low complexity.

The protein localises to the nucleus. C6 finger transcription factor that positively regulates the cluster that mediates the biosynthesis of imizoquins A to D, tripeptide-derived alkaloids that serve a protective role against oxidative stress that are essential for normal germination. This is C6 finger transcription factor imqK from Aspergillus flavus (strain ATCC 200026 / FGSC A1120 / IAM 13836 / NRRL 3357 / JCM 12722 / SRRC 167).